Here is an 86-residue protein sequence, read N- to C-terminus: MKPNIHPPYRTVVFHDTSADAYFTVGSTIATERTIERDGQTYPYVTLDISSASHPYYTGKQKEFAKEGSTARFHQRFGSFLTKKTN.

The protein belongs to the bacterial ribosomal protein bL31 family. Type B subfamily. In terms of assembly, part of the 50S ribosomal subunit.

In Yersinia pseudotuberculosis serotype O:1b (strain IP 31758), this protein is Large ribosomal subunit protein bL31B.